A 331-amino-acid polypeptide reads, in one-letter code: Protein-methionine-sulfoxide reductase catalytic subunit MsrP (331 aa).

A signal peptide (tat-type signal) is located at residues 1 to 54 (MLIKTDRWLRGDDIPASEITPQHLFDQRRRLLAAAALGAAGAALSPWAARRAFA). Residues N86, 89-90 (YE), C144, S179, N227, R232, and 243-245 (SAK) each bind Mo-molybdopterin.

Belongs to the MsrP family. In terms of assembly, heterodimer of a catalytic subunit (MsrP) and a heme-binding subunit (MsrQ). The cofactor is Mo-molybdopterin. In terms of processing, predicted to be exported by the Tat system. The position of the signal peptide cleavage has not been experimentally proven.

The protein resides in the periplasm. It carries out the reaction L-methionyl-[protein] + a quinone + H2O = L-methionyl-(S)-S-oxide-[protein] + a quinol. The catalysed reaction is L-methionyl-[protein] + a quinone + H2O = L-methionyl-(R)-S-oxide-[protein] + a quinol. Part of the MsrPQ system that repairs oxidized periplasmic proteins containing methionine sulfoxide residues (Met-O), using respiratory chain electrons. Thus protects these proteins from oxidative-stress damage caused by reactive species of oxygen and chlorine generated by the host defense mechanisms. MsrPQ is essential for the maintenance of envelope integrity under bleach stress, rescuing a wide series of structurally unrelated periplasmic proteins from methionine oxidation. The catalytic subunit MsrP is non-stereospecific, being able to reduce both (R-) and (S-) diastereoisomers of methionine sulfoxide. This Ralstonia nicotianae (strain ATCC BAA-1114 / GMI1000) (Ralstonia solanacearum) protein is Protein-methionine-sulfoxide reductase catalytic subunit MsrP.